The following is a 238-amino-acid chain: tRNA (guanine-N(1)-)-methyltransferase (238 aa).

Position 132-137 (132-137 (IGDYVL)) interacts with S-adenosyl-L-methionine.

It belongs to the RNA methyltransferase TrmD family. In terms of assembly, homodimer.

Its subcellular location is the cytoplasm. It catalyses the reaction guanosine(37) in tRNA + S-adenosyl-L-methionine = N(1)-methylguanosine(37) in tRNA + S-adenosyl-L-homocysteine + H(+). Specifically methylates guanosine-37 in various tRNAs. The sequence is that of tRNA (guanine-N(1)-)-methyltransferase from Nitrobacter hamburgensis (strain DSM 10229 / NCIMB 13809 / X14).